The primary structure comprises 359 residues: N-acetyl-gamma-glutamyl-phosphate reductase (359 aa).

The active site involves C162.

Belongs to the NAGSA dehydrogenase family. Type 1 subfamily.

The protein localises to the cytoplasm. It catalyses the reaction N-acetyl-L-glutamate 5-semialdehyde + phosphate + NADP(+) = N-acetyl-L-glutamyl 5-phosphate + NADPH + H(+). The protein operates within amino-acid biosynthesis; L-arginine biosynthesis; N(2)-acetyl-L-ornithine from L-glutamate: step 3/4. Its function is as follows. Catalyzes the NADPH-dependent reduction of N-acetyl-5-glutamyl phosphate to yield N-acetyl-L-glutamate 5-semialdehyde. This is N-acetyl-gamma-glutamyl-phosphate reductase from Prochlorococcus marinus (strain MIT 9211).